The sequence spans 291 residues: RPE-retinal G protein-coupled receptor (291 aa).

Residues 1–15 (MAESGTLPTGFGELE) are Extracellular-facing. A helical transmembrane segment spans residues 16–36 (VLAVGTVLLVEALSGLSLNIL). The Cytoplasmic segment spans residues 37–52 (TILSFCKTPELRTPSH). The chain crosses the membrane as a helical span at residues 53 to 73 (LLVLSLALADSGISLNALVAA). Topologically, residues 74-91 (TSSLLRRWPYGSEGCQAH) are extracellular. C88 and C162 are disulfide-bonded. A helical membrane pass occupies residues 92-112 (GFQGFVTALASICSSAAVAWG). Topologically, residues 113-130 (RYHHFCTRSRLDWNTAVS) are cytoplasmic. A helical membrane pass occupies residues 131–151 (LVFFVWLSSAFWAALPLLGWG). Residues 152–175 (HYDYEPLGTCCTLDYSRGDRNFTS) are Extracellular-facing. The N-linked (GlcNAc...) asparagine glycan is linked to N172. A helical membrane pass occupies residues 176–196 (FLFTMAFFNFLLPLFITVVSY). Residues 197 to 219 (RLMEQKLGKTSRPPVNTVLPART) lie on the Cytoplasmic side of the membrane. Residues 220 to 240 (LLLGWGPYALLYLYATIADAT) traverse the membrane as a helical segment. At 241-247 (SISPKLQ) the chain is on the extracellular side. The helical transmembrane segment at 248 to 268 (MVPALIAKAVPTVNAMNYALG) threads the bilayer. At K255 the chain carries N6-(retinylidene)lysine. The Cytoplasmic portion of the chain corresponds to 269-291 (SEMVHRGIWQCLSPQRREHSREQ).

Belongs to the G-protein coupled receptor 1 family. Opsin subfamily. In terms of processing, covalently binds all-trans- and 11-cis-retinal. As to expression, preferentially expressed at high levels in the retinal pigment epithelium (RPE) and Mueller cells of the neural retina.

The protein resides in the membrane. Its function is as follows. Receptor for all-trans- and 11-cis-retinal. Binds preferentially to the former and may catalyze the isomerization of the chromophore by a retinochrome-like mechanism. This Bos taurus (Bovine) protein is RPE-retinal G protein-coupled receptor (RGR).